Consider the following 657-residue polypeptide: 2',3'-cyclic-nucleotide 2'-phosphodiesterase/3'-nucleotidase (657 aa).

An N-terminal signal peptide occupies residues 1-26 (MMNRRHFIQISATSILALSANRFAMA). D41, H43, D86, N126, H235, H267, and H269 together coordinate a divalent metal cation. Substrate-binding positions include Y450 and 554-559 (YRAYGN).

Belongs to the 5'-nucleotidase family. The cofactor is a divalent metal cation.

The protein resides in the periplasm. The enzyme catalyses a nucleoside 2',3'-cyclic phosphate + H2O = a nucleoside 3'-phosphate + H(+). It carries out the reaction a ribonucleoside 3'-phosphate + H2O = a ribonucleoside + phosphate. In terms of biological role, this bifunctional enzyme catalyzes two consecutive reactions during ribonucleic acid degradation. Converts a 2',3'-cyclic nucleotide to a 3'-nucleotide and then the 3'-nucleotide to the corresponding nucleoside and phosphate. In Haemophilus influenzae (strain ATCC 51907 / DSM 11121 / KW20 / Rd), this protein is 2',3'-cyclic-nucleotide 2'-phosphodiesterase/3'-nucleotidase (cpdB).